Here is a 659-residue protein sequence, read N- to C-terminus: UvrABC system protein B (659 aa).

Positions 25 to 182 (QSIENGNRGQ…KKLIEIQYER (158 aa)) constitute a Helicase ATP-binding domain. Position 38-45 (38-45 (GVTGSGKT)) interacts with ATP. Positions 91-114 (YYDYYQPEAYVPQTDTFIEKDASI) match the Beta-hairpin motif. The region spanning 429 to 582 (QIDDLYGEIQ…QMEYNEEHNI (154 aa)) is the Helicase C-terminal domain. The UVR domain occupies 622–657 (EKLIEQYEEEMKEAAKNLQFERAAELRDIIKDLKEN).

It belongs to the UvrB family. Forms a heterotetramer with UvrA during the search for lesions. Interacts with UvrC in an incision complex.

The protein resides in the cytoplasm. The UvrABC repair system catalyzes the recognition and processing of DNA lesions. A damage recognition complex composed of 2 UvrA and 2 UvrB subunits scans DNA for abnormalities. Upon binding of the UvrA(2)B(2) complex to a putative damaged site, the DNA wraps around one UvrB monomer. DNA wrap is dependent on ATP binding by UvrB and probably causes local melting of the DNA helix, facilitating insertion of UvrB beta-hairpin between the DNA strands. Then UvrB probes one DNA strand for the presence of a lesion. If a lesion is found the UvrA subunits dissociate and the UvrB-DNA preincision complex is formed. This complex is subsequently bound by UvrC and the second UvrB is released. If no lesion is found, the DNA wraps around the other UvrB subunit that will check the other stand for damage. The polypeptide is UvrABC system protein B (Clostridium perfringens (strain ATCC 13124 / DSM 756 / JCM 1290 / NCIMB 6125 / NCTC 8237 / Type A)).